A 316-amino-acid polypeptide reads, in one-letter code: Rhomboid-related protein 4 (316 aa).

Over 1–21 the chain is Cytoplasmic; sequence MQRRTRGIDTGLLLLLSQVFH. The chain crosses the membrane as a helical span at residues 22-42; sequence IGINNIPPVTLATLAVNVWFF. Over 43 to 103 the chain is Extracellular; that stretch reads LNPWKPLYHS…KLEKRLGSRW (61 aa). Residues 104–124 form a helical membrane-spanning segment; that stretch reads FAYIIATFSLLTGVVYLLLQF. Residues 125 to 137 lie on the Cytoplasmic side of the membrane; sequence ASAELMNQPDFKR. Residues 138–154 traverse the membrane as a helical segment; the sequence is NCAVGFSGVLFALKVLS. The active-site Nucleophile is the S144. The Extracellular segment spans residues 155–182; it reads NHYCPGGFVNILGFPVPNRFACWAELAA. A helical transmembrane segment spans residues 183-203; sequence IHFCTPGTSFAGHLAGILVGL. Residue H195 is part of the active site. At 204-316 the chain is on the cytoplasmic side; that stretch reads MYTQGPLKKI…RQRLHRFDGQ (113 aa). Positions 269 to 284 are ubiquitin-binding domain (UBD); that stretch reads SEEEQLERALRASIWD. Residues 301–316 form a VCP/p97-interacting motif (VIM) region; the sequence is PEEEMRRQRLHRFDGQ.

Belongs to the peptidase S54 family. As to quaternary structure, interacts with BIK and STEAP3. Interacts (via C-terminal domain) with VCP. Interacts with ubiquitin and ubiquitinated proteins. As to expression, expressed in intestine, lung, brain, kidney, epididymis and testis.

It is found in the endoplasmic reticulum membrane. It localises to the mitochondrion membrane. It carries out the reaction Cleaves type-1 transmembrane domains using a catalytic dyad composed of serine and histidine that are contributed by different transmembrane domains.. Its activity is regulated as follows. Inhibited by aprotinin. Its function is as follows. Intramembrane-cleaving serine protease that cleaves single transmembrane or multi-pass membrane proteins in the hydrophobic plane of the membrane, luminal loops and juxtamembrane regions. Involved in regulated intramembrane proteolysis and the subsequent release of functional polypeptides from their membrane anchors. Functional component of endoplasmic reticulum-associated degradation (ERAD) for misfolded membrane proteins. Required for the degradation process of some specific misfolded endoplasmic reticulum (ER) luminal proteins. Participates in the transfer of misfolded proteins from the ER to the cytosol, where they are destroyed by the proteasome in a ubiquitin-dependent manner. Functions in BIK, MPZ, PKD1, PTCRA, RHO, STEAP3 and TRAC processing. Involved in the regulation of exosomal secretion; inhibits the TSAP6-mediated secretion pathway. Involved in the regulation of apoptosis; modulates BIK-mediated apoptotic activity. Also plays a role in the regulation of spermatogenesis; inhibits apoptotic activity in spermatogonia. In Rattus norvegicus (Rat), this protein is Rhomboid-related protein 4 (Rhbdd1).